We begin with the raw amino-acid sequence, 356 residues long: Tyrosine recombinase XerS (356 aa).

Residues 16 to 121 enclose the Core-binding (CB) domain; that stretch reads LMPWFVLEYY…ALSSLYKYLT (106 aa). A Tyr recombinase domain is found at 169-354; it reads KFLDYVENEY…VNDEQKNALD (186 aa). Active-site residues include R210, K234, H306, R309, and H332. Y341 (O-(3'-phospho-DNA)-tyrosine intermediate) is an active-site residue.

The protein belongs to the 'phage' integrase family. XerS subfamily.

It localises to the cytoplasm. FtsK is required for recombination. Its function is as follows. Site-specific tyrosine recombinase, which acts by catalyzing the cutting and rejoining of the recombining DNA molecules. Essential to convert dimers of the bacterial chromosome into monomers to permit their segregation at cell division. The sequence is that of Tyrosine recombinase XerS from Streptococcus thermophilus (strain ATCC BAA-491 / LMD-9).